A 267-amino-acid polypeptide reads, in one-letter code: Probable ribosomal RNA small subunit methyltransferase A (267 aa).

S-adenosyl-L-methionine-binding residues include L12, G37, E58, D83, and N100.

It belongs to the class I-like SAM-binding methyltransferase superfamily. rRNA adenine N(6)-methyltransferase family. RsmA subfamily.

The protein localises to the cytoplasm. In terms of biological role, specifically dimethylates two adjacent adenosines in the loop of a conserved hairpin near the 3'-end of 16S rRNA in the 30S particle. May play a critical role in biogenesis of 30S subunits. The protein is Probable ribosomal RNA small subunit methyltransferase A of Methanococcus vannielii (strain ATCC 35089 / DSM 1224 / JCM 13029 / OCM 148 / SB).